An 821-amino-acid chain; its full sequence is Glycogen phosphorylase (821 aa).

Residue lysine 667 is modified to N6-(pyridoxal phosphate)lysine.

It belongs to the glycogen phosphorylase family. The cofactor is pyridoxal 5'-phosphate.

It carries out the reaction [(1-&gt;4)-alpha-D-glucosyl](n) + phosphate = [(1-&gt;4)-alpha-D-glucosyl](n-1) + alpha-D-glucose 1-phosphate. Functionally, phosphorylase is an important allosteric enzyme in carbohydrate metabolism. Enzymes from different sources differ in their regulatory mechanisms and in their natural substrates. However, all known phosphorylases share catalytic and structural properties. The chain is Glycogen phosphorylase (glgP) from Haemophilus influenzae (strain ATCC 51907 / DSM 11121 / KW20 / Rd).